We begin with the raw amino-acid sequence, 809 residues long: Cyclic nucleotide-gated channel beta-3 (809 aa).

2 disordered regions span residues 1–121 (MFKS…PPAA) and 153–178 (GDLS…ESDD). At 1–218 (MFKSLTKVNK…SIDSYTDRLY (218 aa)) the chain is on the cytoplasmic side. Residues 22 to 31 (QSSRRNEEGS) show a composition bias toward basic and acidic residues. Residues 32 to 43 (HPSNQSQQTTAQ) show a composition bias toward polar residues. A compositionally biased stretch (basic and acidic residues) spans 44–53 (EENKGEEKSL). The segment covering 55 to 88 (TKSTPVTSEEPHTNIQDKLSKKNSSGDLTTNPDP) has biased composition (polar residues). The chain crosses the membrane as a helical span at residues 219–242 (LLWLLLVTLAYNWNCCFIPLRLVF). Topologically, residues 243 to 249 (PYQTADN) are extracellular. The chain crosses the membrane as a helical span at residues 250-270 (IHYWLIADIICDIIYLYDMLF). Residues 271 to 299 (IQPRLQFVRGGDIIVDSNELRKHYRTSTK) lie on the Cytoplasmic side of the membrane. The chain crosses the membrane as a helical span at residues 300 to 317 (FQLDVASIIPFDICYLFF). Residues 318-320 (GFN) lie on the Extracellular side of the membrane. The chain crosses the membrane as a helical span at residues 321–335 (PMFRANRMLKYTSFF). Residues 336–348 (EFNHHLESIMDKA) lie on the Cytoplasmic side of the membrane. The segment at 348–447 (AYIYRVIRTT…IGQMRDVIGA (100 aa)) is ion conduction pathway. A helical membrane pass occupies residues 349–371 (YIYRVIRTTGYLLFILHINACVY). Over 372-393 (YWASNYEGIGTTRWVYDGEGNE) the chain is Extracellular. 2 helical membrane passes run 394–420 (YLRC…LFEI) and 421–445 (VFQL…RDVI). Positions 407–410 (TIGG) are selectivity filter. Residues 446-809 (GAATANQNYF…TIEVKEKAKQ (364 aa)) are Cytoplasmic-facing. The segment at 450–526 (ANQNYFRACM…SIISKVDLFK (77 aa)) is C-linker. The interval 530–646 (TQMIYDMLLR…ILMKKARVLL (117 aa)) is cyclic nucleotide-binding domain. 3',5'-cyclic GMP-binding residues include glycine 591, glutamate 592, arginine 604, and threonine 605. The interval 698–776 (QAAQKKENSE…PHSVRRTVLP (79 aa)) is disordered. Residues 716–755 (NEDKQKENEDKQKENEDKGKENEDKDKGREPEEKPLDRPE) show a composition bias toward basic and acidic residues.

The protein belongs to the cyclic nucleotide-gated cation channel (TC 1.A.1.5) family. CNGB3 subfamily. As to quaternary structure, forms heterotetrameric channels composed of CNGA3 and CNGB3 subunits with 3:1 stoichiometry. Expressed specifically in the retina.

The protein localises to the cell membrane. It catalyses the reaction Ca(2+)(in) = Ca(2+)(out). The catalysed reaction is Na(+)(in) = Na(+)(out). It carries out the reaction K(+)(in) = K(+)(out). The enzyme catalyses NH4(+)(in) = NH4(+)(out). It catalyses the reaction Rb(+)(in) = Rb(+)(out). The catalysed reaction is Li(+)(in) = Li(+)(out). It carries out the reaction Cs(+)(in) = Cs(+)(out). Pore-forming subunit of the cone cyclic nucleotide-gated channel. Mediates cone photoresponses at bright light converting transient changes in intracellular cGMP levels into electrical signals. In the dark, cGMP levels are high and keep the channel open enabling a steady inward current carried by Na(+) and Ca(2+) ions that leads to membrane depolarization and neurotransmitter release from synaptic terminals. Upon photon absorption cGMP levels decline leading to channel closure and membrane hyperpolarization that ultimately slows neurotransmitter release and signals the presence of light, the end point of the phototransduction cascade. Conducts cGMP- and cAMP-gated ion currents, with permeability for monovalent and divalent cations. In Homo sapiens (Human), this protein is Cyclic nucleotide-gated channel beta-3.